The chain runs to 1341 residues: uncharacterized protein (1341 aa).

The zn(2)-C6 fungal-type DNA-binding region spans 41-68; it reads CLLCRRRKQRCDHKLPSCTACLKAGIKC. Low complexity-rich tracts occupy residues 72–93, 779–791, 864–906, 920–967, and 1036–1050; these read SKYSSSTSNSNTNNNTPTAGTV, SNSANAANLSNSN, SNSS…NDNN, NHNN…GNNS, and SPSKSSSISTASSHS. 4 disordered regions span residues 72–100, 770–804, 864–971, and 1031–1116; these read SKYSSSTSNSNTNNNTPTAGTVPPTPHPV, ISSGDTLHDSNSANAANLSNSNDKNISHNGGMPPA, SNSS…QYVR, and TMTN…NSNP. Residues 1057–1076 are compositionally biased toward polar residues; sequence MTQSPTPYPQTSNMLPQQHV. Residues 1078 to 1090 show a composition bias toward low complexity; that stretch reads RPLPQQQREQPQQ. The span at 1091 to 1116 shows a compositional bias: polar residues; that stretch reads HITSPQRFSESNFTNQLNNGMINSNP. At serine 1143 the chain carries Phosphoserine. The span at 1220–1230 shows a compositional bias: polar residues; sequence SQEPSSLSMDK. A disordered region spans residues 1220–1240; that stretch reads SQEPSSLSMDKQQQQHQQQNM.

It is found in the nucleus. This is an uncharacterized protein from Saccharomyces cerevisiae (strain ATCC 204508 / S288c) (Baker's yeast).